The chain runs to 203 residues: ATP-dependent Clp protease proteolytic subunit (203 aa).

Residue S101 is the Nucleophile of the active site. The active site involves H126.

This sequence belongs to the peptidase S14 family. As to quaternary structure, component of the chloroplastic Clp protease core complex.

The protein resides in the plastid. Its subcellular location is the chloroplast stroma. The enzyme catalyses Hydrolysis of proteins to small peptides in the presence of ATP and magnesium. alpha-casein is the usual test substrate. In the absence of ATP, only oligopeptides shorter than five residues are hydrolyzed (such as succinyl-Leu-Tyr-|-NHMec, and Leu-Tyr-Leu-|-Tyr-Trp, in which cleavage of the -Tyr-|-Leu- and -Tyr-|-Trp bonds also occurs).. In terms of biological role, cleaves peptides in various proteins in a process that requires ATP hydrolysis. Has a chymotrypsin-like activity. Plays a major role in the degradation of misfolded proteins. This Marchantia polymorpha (Common liverwort) protein is ATP-dependent Clp protease proteolytic subunit.